We begin with the raw amino-acid sequence, 323 residues long: Peroxidase 16 (323 aa).

A signal peptide spans 1–23 (MKNQSSFSIVALLLIFFSSSVFA). Intrachain disulfides connect C34–C113, C67–C72, C119–C319, and C198–C230. Catalysis depends on H65, which acts as the Proton acceptor. The Ca(2+) site is built by D66, V69, G71, D73, and S75. P161 serves as a coordination point for substrate. Residue H191 participates in heme b binding. T192 serves as a coordination point for Ca(2+). Ca(2+)-binding residues include D243, S246, and D251.

It belongs to the peroxidase family. Classical plant (class III) peroxidase subfamily. Requires heme b as cofactor. It depends on Ca(2+) as a cofactor. As to expression, expressed in the whole plant, but preferentially in roots and leaves.

The protein localises to the secreted. It carries out the reaction 2 a phenolic donor + H2O2 = 2 a phenolic radical donor + 2 H2O. Removal of H(2)O(2), oxidation of toxic reductants, biosynthesis and degradation of lignin, suberization, auxin catabolism, response to environmental stresses such as wounding, pathogen attack and oxidative stress. These functions might be dependent on each isozyme/isoform in each plant tissue. This Arabidopsis thaliana (Mouse-ear cress) protein is Peroxidase 16 (PER16).